Here is a 518-residue protein sequence, read N- to C-terminus: Ent-cassadiene hydroxylase (518 aa).

The chain crosses the membrane as a helical span at residues 6-26; sequence LILALGLSVLFVLLSKLVSSA. Cys-451 serves as a coordination point for heme.

The protein belongs to the cytochrome P450 family. It depends on heme as a cofactor.

It localises to the membrane. It catalyses the reaction ent-cassa-12,15-diene + 3 reduced [NADPH--hemoprotein reductase] + 3 O2 = ent-3beta-hydroxycassa-12,15-dien-2-one + 3 oxidized [NADPH--hemoprotein reductase] + 4 H2O + 3 H(+). Functionally, enzyme of the diterpenoid metabolism involved in the biosynthesis of antibacterial oryzalides such as phytocassane. Catalyzes the hydroxylation of ent-cassa-12,15-diene to form ent-3beta-hydroxycassa-12,15-dien-2-one. This chain is Ent-cassadiene hydroxylase (CYP71Z7), found in Oryza sativa subsp. japonica (Rice).